Reading from the N-terminus, the 253-residue chain is 2-dehydro-3-deoxy-D-gluconate 5-dehydrogenase (253 aa).

14-38 (LITGCDTGLGQGMAVGLAEAGCDIV) is a binding site for NAD(+). A substrate-binding site is contributed by serine 145. The active-site Proton acceptor is the tyrosine 158.

Belongs to the short-chain dehydrogenases/reductases (SDR) family.

The catalysed reaction is 2-dehydro-3-deoxy-D-gluconate + NAD(+) = 3-deoxy-D-glycero-2,5-hexodiulosonate + NADH + H(+). It participates in glycan metabolism; pectin degradation; 2-dehydro-3-deoxy-D-gluconate from pectin: step 5/5. Catalyzes the reduction of 2,5-diketo-3-deoxygluconate (DKII or 4,6-dihydroxy-2,5-dioxohexanoate) into 2-keto-3-deoxygluconate (KDG or 2-dehydro-3-deoxygluconate) with a concomitant oxidation of NADH. The sequence is that of 2-dehydro-3-deoxy-D-gluconate 5-dehydrogenase (kduD) from Dickeya dadantii (strain 3937) (Erwinia chrysanthemi (strain 3937)).